Consider the following 253-residue polypeptide: FAS1 domain-containing protein CAGL0M08734g (253 aa).

Positions 1–16 (MVALKYVLVPVALVAA) are cleaved as a signal peptide. Positions 84–248 (DIYLDSQISV…GVILVIDATL (165 aa)) constitute an FAS1 domain.

It is found in the vacuole. The polypeptide is FAS1 domain-containing protein CAGL0M08734g (Candida glabrata (strain ATCC 2001 / BCRC 20586 / JCM 3761 / NBRC 0622 / NRRL Y-65 / CBS 138) (Yeast)).